Here is a 314-residue protein sequence, read N- to C-terminus: Methionyl-tRNA formyltransferase (314 aa).

Position 113–116 (113–116 (SLLP)) interacts with (6S)-5,6,7,8-tetrahydrofolate.

Belongs to the Fmt family.

The enzyme catalyses L-methionyl-tRNA(fMet) + (6R)-10-formyltetrahydrofolate = N-formyl-L-methionyl-tRNA(fMet) + (6S)-5,6,7,8-tetrahydrofolate + H(+). In terms of biological role, attaches a formyl group to the free amino group of methionyl-tRNA(fMet). The formyl group appears to play a dual role in the initiator identity of N-formylmethionyl-tRNA by promoting its recognition by IF2 and preventing the misappropriation of this tRNA by the elongation apparatus. This Chlorobaculum tepidum (strain ATCC 49652 / DSM 12025 / NBRC 103806 / TLS) (Chlorobium tepidum) protein is Methionyl-tRNA formyltransferase.